The following is an 85-amino-acid chain: UPF0291 protein SEQ_0545 (85 aa).

The segment at 62–85 is disordered; the sequence is TPEKLRQVQREKGLHGRSLDDPES.

This sequence belongs to the UPF0291 family.

The protein resides in the cytoplasm. This Streptococcus equi subsp. equi (strain 4047) protein is UPF0291 protein SEQ_0545.